The sequence spans 58 residues: uncharacterized protein (58 aa).

Residues 24–44 (LSVYLGLATTIVCIVLFFTML) form a helical membrane-spanning segment.

It localises to the membrane. This is an uncharacterized protein from Haemophilus influenzae (strain ATCC 51907 / DSM 11121 / KW20 / Rd).